The following is a 424-amino-acid chain: UPF0761 membrane protein Smal_0716 (424 aa).

6 helical membrane passes run 48 to 68 (VFAL…FPVF), 101 to 121 (SAGQ…LITL), 144 to 164 (FLVY…SLAV), 181 to 201 (WLAD…CITL), 216 to 236 (AVPG…GIGA), and 251 to 271 (VAFV…VLLG).

It belongs to the UPF0761 family.

The protein localises to the cell inner membrane. The protein is UPF0761 membrane protein Smal_0716 of Stenotrophomonas maltophilia (strain R551-3).